A 188-amino-acid chain; its full sequence is Elongation factor P (188 aa).

It belongs to the elongation factor P family.

The protein resides in the cytoplasm. The protein operates within protein biosynthesis; polypeptide chain elongation. Involved in peptide bond synthesis. Stimulates efficient translation and peptide-bond synthesis on native or reconstituted 70S ribosomes in vitro. Probably functions indirectly by altering the affinity of the ribosome for aminoacyl-tRNA, thus increasing their reactivity as acceptors for peptidyl transferase. This chain is Elongation factor P, found in Cellvibrio japonicus (strain Ueda107) (Pseudomonas fluorescens subsp. cellulosa).